Reading from the N-terminus, the 145-residue chain is Large ribosomal subunit protein uL15 (145 aa).

The interval 1-50 (MLHTIKPVANARKTTKRLGRGPGSGTGKTSGKGHKGQLARSGKTLRPGFE) is disordered. Residues 20–30 (RGPGSGTGKTS) are compositionally biased toward gly residues.

The protein belongs to the universal ribosomal protein uL15 family. In terms of assembly, part of the 50S ribosomal subunit.

In terms of biological role, binds to the 23S rRNA. This Phytoplasma australiense protein is Large ribosomal subunit protein uL15.